The primary structure comprises 199 residues: Nitrile hydratase subunit alpha (199 aa).

Fe(3+)-binding residues include C102, C105, S106, and C107. Cysteine sulfinic acid (-SO2H) is present on C105. The residue at position 107 (C107) is a Cysteine sulfenic acid (-SOH).

Belongs to the nitrile hydratase subunit alpha family. As to quaternary structure, heterodimer of an alpha and a beta chain. The cofactor is Fe(3+). Post-translationally, oxidation on Cys-105 is essential for the activity. In terms of processing, oxidation on Cys-107 stabilizes the Fe-NO ligand coordinated in the inactive form.

The enzyme catalyses an aliphatic primary amide = an aliphatic nitrile + H2O. Inactivated by oxidation of Cys-107 to a sulfenic acid. In terms of biological role, NHase catalyzes the hydration of various nitrile compounds to the corresponding amides. Industrial production of acrylamide is now being developed using some of the enzymes of this class. In Rhodococcus sp, this protein is Nitrile hydratase subunit alpha (nthA).